The primary structure comprises 512 residues: GMP synthase [glutamine-hydrolyzing] (512 aa).

Positions 7-197 (TIIVLDFGSQ…VFGVCGCSEG (191 aa)) constitute a Glutamine amidotransferase type-1 domain. Cysteine 84 acts as the Nucleophile in catalysis. Active-site residues include histidine 171 and glutamate 173. The GMPS ATP-PPase domain occupies 198-387 (WNMENFIEVE…LGIPDEIVWR (190 aa)). Residue 225–231 (SGGVDSS) participates in ATP binding.

Homodimer.

It catalyses the reaction XMP + L-glutamine + ATP + H2O = GMP + L-glutamate + AMP + diphosphate + 2 H(+). The protein operates within purine metabolism; GMP biosynthesis; GMP from XMP (L-Gln route): step 1/1. Catalyzes the synthesis of GMP from XMP. In Bacillus cereus (strain G9842), this protein is GMP synthase [glutamine-hydrolyzing].